Consider the following 242-residue polypeptide: Biosynthetic peptidoglycan transglycosylase (242 aa).

The helical transmembrane segment at 19 to 39 (LMVVLAVFWGGGIALFSVAPV) threads the bilayer.

Belongs to the glycosyltransferase 51 family.

Its subcellular location is the cell inner membrane. The enzyme catalyses [GlcNAc-(1-&gt;4)-Mur2Ac(oyl-L-Ala-gamma-D-Glu-L-Lys-D-Ala-D-Ala)](n)-di-trans,octa-cis-undecaprenyl diphosphate + beta-D-GlcNAc-(1-&gt;4)-Mur2Ac(oyl-L-Ala-gamma-D-Glu-L-Lys-D-Ala-D-Ala)-di-trans,octa-cis-undecaprenyl diphosphate = [GlcNAc-(1-&gt;4)-Mur2Ac(oyl-L-Ala-gamma-D-Glu-L-Lys-D-Ala-D-Ala)](n+1)-di-trans,octa-cis-undecaprenyl diphosphate + di-trans,octa-cis-undecaprenyl diphosphate + H(+). It participates in cell wall biogenesis; peptidoglycan biosynthesis. In terms of biological role, peptidoglycan polymerase that catalyzes glycan chain elongation from lipid-linked precursors. This Escherichia coli (strain SMS-3-5 / SECEC) protein is Biosynthetic peptidoglycan transglycosylase.